We begin with the raw amino-acid sequence, 480 residues long: Uronate isomerase (480 aa).

Belongs to the metallo-dependent hydrolases superfamily. Uronate isomerase family.

The catalysed reaction is D-glucuronate = D-fructuronate. It catalyses the reaction aldehydo-D-galacturonate = keto-D-tagaturonate. The protein operates within carbohydrate metabolism; pentose and glucuronate interconversion. This chain is Uronate isomerase, found in Phenylobacterium zucineum (strain HLK1).